The following is a 953-amino-acid chain: MHCAERLRTEERASPGLIACTAVHKPSKSTRIKPTKPHHTPSNSMESALKKDTESTCVLCCQDIDLFAVGKCDHPVCYRCSTKMRVLCEQKYCAVCREQLDKVVFLRKPEAFATLNIHHYQCEKKYDIYFGDGKVHAQFRKILLNECPHCPEPKVFSKFEELEQHMRKQHELFCCKLCLKHLKIFSYERKWYSRKDLARHRMQGDPDDTSHRGHPLCKFCDDRYLDNDELLKHLRRDHYFCHFCDADGAQEYYSDYQYLSEHFRESHYLCEEGRCSTEQFTHAFRTEIDYKAHKAAAHSKNRAEARQNRQIDIQFNYAPRQQRRNDVGGDDYEEVDRFNRQGRPGRGRGPGGQQNLRSWRYNREEEDREMAAAMRASMASHQEERSHAQERSMLKPRREEKLEPDETRNNRSTARPTNDTQARSMKSNGSLAGQDFPVLGAGAPPAPVQSMIQKPSVSLKEDDFPSLSGSVVSSPMTPAYTNQPRKHSSFQEEDFPALVSKIKPLKPQSSAASAWSQAGSKPVVAPNKPVVLPTKMTPMSSSSILSSTDPLPSASVPQPLTASSSRRKKMLTLTESHKDPPKIRCPSSSDDEDPHSGKTAQEIRTVPTMLDISTLLTVKGSSPQANPKASKKKKQTTASSLGSPSHTPETVSKMAHKENVPEKKPPETGLNKAPTAPKTNSIVNGVAEKPAEALSCTSFPENITSSKQPVTDQAPPSKEEEFPALISKKPPPGFKSAFPLRNSQSALPPPPPPGLGPAVSKPPPGFTGVPLNSNVEDSSVSAVNRPTPAIGSYLIPDHFQQRNMDLIQSIKNFLQNDETKFNEFKNYSGQFRQGALPAVQYYKSCQELLGENFNRVFNELLVLLPDTRKQQELLTAHGDFKALEKQQQGSKPKKSKKKAWQTGTSSSSSLDLDCQVCPTCKQVLALKDFNTHKTLHIGDDDFPSLQAISKIIS.

Over residues K25–H39 the composition is skewed to basic residues. The tract at residues K25–S47 is disordered. An RING-type zinc finger spans residues C57–R97. The C2H2-type zinc finger occupies P215 to H238. Disordered stretches follow at residues S299–S779 and E884–D911. The segment covering A371–S380 has biased composition (low complexity). Basic and acidic residues predominate over residues H381 to N409. 2 stretches are compositionally biased toward polar residues: residues N410 to L431 and L467 to Q483. The residue at position 489 (S489) is a Phosphoserine. 2 stretches are compositionally biased toward low complexity: residues Q508–A518 and M536–S553. Polar residues-rich tracts occupy residues S555–S564 and L641–T650. The segment covering A655–P666 has biased composition (basic and acidic residues). Polar residues predominate over residues S695–T711. A compositionally biased stretch (pro residues) spans L747–G765. Residues P770 to S779 show a composition bias toward polar residues.

This sequence belongs to the ZNF598/HEL2 family.

The protein localises to the cytoplasm. Its subcellular location is the cytosol. It carries out the reaction S-ubiquitinyl-[E2 ubiquitin-conjugating enzyme]-L-cysteine + [acceptor protein]-L-lysine = [E2 ubiquitin-conjugating enzyme]-L-cysteine + N(6)-ubiquitinyl-[acceptor protein]-L-lysine.. The protein operates within protein modification; protein ubiquitination. Functionally, E3 ubiquitin-protein ligase that plays a key role in the ribosome quality control (RQC), a pathway that takes place when a ribosome has stalled during translation, leading to degradation of nascent peptide chains. ZNF598 is activated when ribosomes are stalled within an mRNA following translation of prematurely polyadenylated mRNAs. Acts as a ribosome collision sensor: specifically recognizes and binds collided di-ribosome, which arises when a trailing ribosome encounters a slower leading ribosome, leading to terminally arrest translation. Following binding to colliding ribosomes, mediates monoubiquitination of 40S ribosomal proteins RPS10/eS10 and RPS3/uS3, and 'Lys-63'-linked polyubiquitination of RPS20/uS10. Polyubiquitination of RPS20/uS10 promotes recruitment of the RQT (ribosome quality control trigger) complex, which drives the disassembly of stalled ribosomes, followed by degradation of nascent peptides. This is E3 ubiquitin-protein ligase ZNF598 from Danio rerio (Zebrafish).